A 189-amino-acid polypeptide reads, in one-letter code: Probable DNA-directed RNA polymerase subunit delta (189 aa).

The 68-residue stretch at 14–81 folds into the HTH HARE-type domain; that stretch reads LSMIEVAHAI…GENVWALRTW (68 aa). 2 stretches are compositionally biased toward acidic residues: residues 90 to 100 and 118 to 189; these read EVDHPEDDGDE and EGDD…EDEE. The tract at residues 90 to 189 is disordered; sequence EVDHPEDDGD…DDLDDDEDEE (100 aa).

The protein belongs to the RpoE family. In terms of assembly, RNAP is composed of a core of 2 alpha, a beta and a beta' subunits. The core is associated with a delta subunit and one of several sigma factors.

Participates in both the initiation and recycling phases of transcription. In the presence of the delta subunit, RNAP displays an increased specificity of transcription, a decreased affinity for nucleic acids, and an increased efficiency of RNA synthesis because of enhanced recycling. The polypeptide is Probable DNA-directed RNA polymerase subunit delta (Lactobacillus delbrueckii subsp. bulgaricus (strain ATCC BAA-365 / Lb-18)).